The primary structure comprises 389 residues: Alpha-2B adrenergic receptor (389 aa).

The helical transmembrane segment at 1–25 threads the bilayer; that stretch reads AIAAVITFLILFTIFGNALVILAVL. Residues 26-36 are Cytoplasmic-facing; it reads TSRSLRAPQNL. Residues 37-62 form a helical membrane-spanning segment; sequence FLVSLAAADILVATLIIPFSLANELL. The Extracellular portion of the chain corresponds to 63-72; sequence GYWYFRRTWC. Cysteine 72 and cysteine 151 are disulfide-bonded. The helical transmembrane segment at 73 to 95 threads the bilayer; sequence EVYLALDVLFCTSSIVHLCAISL. Over 96–117 the chain is Cytoplasmic; the sequence is DRYWAVTRALEYNTKRTPRRIK. A helical membrane pass occupies residues 118–140; it reads CIILTVWLIAAVISLPPLIYKGD. Topologically, residues 141-156 are extracellular; it reads QGPQPRGRPQCKLNQE. A helical transmembrane segment spans residues 157-180; the sequence is AWYILASSIGSFFAPCLIMILVYL. At 181–363 the chain is on the cytoplasmic side; that stretch reads RIYLIAKRSH…LTREKRFTFV (183 aa). Disordered stretches follow at residues 194–216 and 233–320; these read PRAKGGPGGGGSKQPHPVPAGAS and EANG…PLQQ. A compositionally biased stretch (gly residues) spans 196–205; the sequence is AKGGPGGGGS. A compositionally biased stretch (low complexity) spans 255-267; the sequence is PALPSSWPALPSS. Acidic residues predominate over residues 280 to 302; it reads LEEEAEEEEEEEEEEEEGEEECE. Low complexity predominate over residues 303–320; the sequence is PQALPASPASACSPPLQQ. Residues 364 to 387 form a helical membrane-spanning segment; that stretch reads LAVVIGVFVLCWFPFFFSYSLGAI. The Extracellular segment spans residues 388-389; it reads CP.

Belongs to the G-protein coupled receptor 1 family. Adrenergic receptor subfamily. ADRA2B sub-subfamily. As to quaternary structure, interacts with RAB26. Interacts with PPP1R9B. Interacts with GGA1, GGA2 and GGA3.

It is found in the cell membrane. Its function is as follows. Alpha-2 adrenergic receptors mediate the catecholamine-induced inhibition of adenylate cyclase through the action of G proteins. The protein is Alpha-2B adrenergic receptor (ADRA2B) of Equus caballus (Horse).